The chain runs to 716 residues: Phenylalanine/tyrosine ammonia-lyase (716 aa).

The Proton donor/acceptor role is filled by Y110. Positions 211–213 (ASG) form a cross-link, 5-imidazolinone (Ala-Gly). A 2,3-didehydroalanine (Ser) modification is found at S212. N270, Q360, R366, N397, K468, E496, and N499 together coordinate (E)-cinnamate.

The protein belongs to the PAL/histidase family. Homotetramer. Dimer of dimers. Contains an active site 4-methylidene-imidazol-5-one (MIO), which is formed autocatalytically by cyclization and dehydration of residues Ala-Ser-Gly.

It is found in the cytoplasm. The catalysed reaction is L-phenylalanine = (E)-cinnamate + NH4(+). It catalyses the reaction L-tyrosine = (E)-4-coumarate + NH4(+). It participates in phenylpropanoid metabolism; trans-cinnamate biosynthesis; trans-cinnamate from L-phenylalanine: step 1/1. Functionally, catalyzes the non-oxidative deamination of L-phenylalanine and L-tyrosine to form trans-cinnamic acid and p-coumaric acid respectively with similar efficiencies. Facilitates the commitment step in phenylpropanoid pathways that produce secondary metabolites such as lignins, coumarins and flavonoids. The sequence is that of Phenylalanine/tyrosine ammonia-lyase (PAL) from Rhodotorula toruloides (Yeast).